Consider the following 208-residue polypeptide: N-(5'-phosphoribosyl)anthranilate isomerase (208 aa).

The protein belongs to the TrpF family.

It catalyses the reaction N-(5-phospho-beta-D-ribosyl)anthranilate = 1-(2-carboxyphenylamino)-1-deoxy-D-ribulose 5-phosphate. The protein operates within amino-acid biosynthesis; L-tryptophan biosynthesis; L-tryptophan from chorismate: step 3/5. In Nitrosospira multiformis (strain ATCC 25196 / NCIMB 11849 / C 71), this protein is N-(5'-phosphoribosyl)anthranilate isomerase.